Here is a 506-residue protein sequence, read N- to C-terminus: 2-isopropylmalate synthase (506 aa).

The 263-residue stretch at 4–266 (ILFMDTTLRD…EPSMTLKEIK (263 aa)) folds into the Pyruvate carboxyltransferase domain. 4 residues coordinate Mn(2+): Asp-13, His-201, His-203, and Asn-237. A regulatory domain region spans residues 390-506 (NITQLQVHFV…KLKSFIQLVK (117 aa)).

The protein belongs to the alpha-IPM synthase/homocitrate synthase family. LeuA type 1 subfamily. Homodimer. It depends on Mn(2+) as a cofactor.

It is found in the cytoplasm. The enzyme catalyses 3-methyl-2-oxobutanoate + acetyl-CoA + H2O = (2S)-2-isopropylmalate + CoA + H(+). It participates in amino-acid biosynthesis; L-leucine biosynthesis; L-leucine from 3-methyl-2-oxobutanoate: step 1/4. Its function is as follows. Catalyzes the condensation of the acetyl group of acetyl-CoA with 3-methyl-2-oxobutanoate (2-ketoisovalerate) to form 3-carboxy-3-hydroxy-4-methylpentanoate (2-isopropylmalate). This Bacillus cereus (strain ZK / E33L) protein is 2-isopropylmalate synthase.